The primary structure comprises 278 residues: Protoheme IX farnesyltransferase 1 (278 aa).

9 consecutive transmembrane segments (helical) span residues 12-32 (VIWLLILASVAGYIYGGGGVD), 35-55 (LFSLLAVAFLSTGGSAAFNHY), 76-96 (LITPNAALAYSLALSATGISL), 98-118 (FLLLGLLPGLFVLLGWLFYAV), 129-149 (WLNIFGGGFAGNAVFLGGYAL), 158-178 (AVLISFAIYLWIPSHIWALAF), 199-221 (ERAVAVISAINAAAAAYILWLYL), 226-248 (GAGGALVALGVAATIATSIYAAV), and 255-275 (MWKMYKASSPILALFLIALIL).

The protein belongs to the UbiA prenyltransferase family. Protoheme IX farnesyltransferase subfamily.

It is found in the cell membrane. It carries out the reaction heme b + (2E,6E)-farnesyl diphosphate + H2O = Fe(II)-heme o + diphosphate. It participates in porphyrin-containing compound metabolism; heme O biosynthesis; heme O from protoheme: step 1/1. In terms of biological role, converts heme B (protoheme IX) to heme O by substitution of the vinyl group on carbon 2 of heme B porphyrin ring with a hydroxyethyl farnesyl side group. The sequence is that of Protoheme IX farnesyltransferase 1 from Pyrobaculum aerophilum (strain ATCC 51768 / DSM 7523 / JCM 9630 / CIP 104966 / NBRC 100827 / IM2).